The primary structure comprises 431 residues: UDP-N-acetylglucosamine 1-carboxyvinyltransferase (431 aa).

22–23 is a phosphoenolpyruvate binding site; that stretch reads KN. Arg-102 is a UDP-N-acetyl-alpha-D-glucosamine binding site. Residue Cys-126 is the Proton donor of the active site. The residue at position 126 (Cys-126) is a 2-(S-cysteinyl)pyruvic acid O-phosphothioketal. UDP-N-acetyl-alpha-D-glucosamine is bound by residues Asp-318 and Ile-340.

The protein belongs to the EPSP synthase family. MurA subfamily.

It is found in the cytoplasm. It carries out the reaction phosphoenolpyruvate + UDP-N-acetyl-alpha-D-glucosamine = UDP-N-acetyl-3-O-(1-carboxyvinyl)-alpha-D-glucosamine + phosphate. Its pathway is cell wall biogenesis; peptidoglycan biosynthesis. In terms of biological role, cell wall formation. Adds enolpyruvyl to UDP-N-acetylglucosamine. The polypeptide is UDP-N-acetylglucosamine 1-carboxyvinyltransferase (Bartonella quintana (strain Toulouse) (Rochalimaea quintana)).